A 400-amino-acid chain; its full sequence is Snake venom metalloproteinase H1 (400 aa).

Residues 1–6 form the signal peptide; that stretch reads FPYQGS. A propeptide spanning residues 7 to 176 is cleaved from the precursor; that stretch reads SIILESGNVN…KKASQLIVST (170 aa). One can recognise a Peptidase M12B domain in the interval 180–377; it reads RYMEIVIVVD…ENPPCILNKP (198 aa). Residues E183 and D267 each coordinate Ca(2+). 3 cysteine pairs are disulfide-bonded: C291–C372, C331–C356, and C333–C339. Zn(2+) is bound at residue H316. E317 is a catalytic residue. Residues H320 and H326 each coordinate Zn(2+). 7 residues coordinate Ca(2+): C372, N375, V387, N390, L392, E394, and D400. Positions 378 to 400 are excised as a propeptide; it reads LRTDTVSTPVSGNELLEAGKDYD.

The protein belongs to the venom metalloproteinase (M12B) family. P-I subfamily. In terms of assembly, monomer. Zn(2+) is required as a cofactor. Expressed by the venom gland.

It localises to the secreted. In terms of biological role, snake venom metalloproteinase that impairs hemostasis in the envenomed animal. The protein is Snake venom metalloproteinase H1 of Deinagkistrodon acutus (Hundred-pace snake).